A 406-amino-acid polypeptide reads, in one-letter code: Probable peptidoglycan glycosyltransferase FtsW (406 aa).

A run of 9 helical transmembrane segments spans residues 22–42, 56–76, 86–106, 116–136, 153–173, 186–206, 280–300, 318–338, and 352–372; these read LWFVMSLIAILALGIVMVASA, FFMGRQILYLILGVSFGFMML, WGILLMLLSLVLLVLVLVPGI, WINLIVFNLQASEVAKVCMVV, LIGFALPLFLTSLFLIFLLME, VIALLFIGGAPVYQFIAIVIM, IWVEEMGLLGGVVLLSLFALM, FAGYMCFGFAILILAQVIINV, and LPLISYGGSSLIITLGSLFVV. Residues 383 to 397 show a composition bias toward basic and acidic residues; the sequence is SKGGESEERKRKSDE. Residues 383 to 406 are disordered; that stretch reads SKGGESEERKRKSDESIDDGEALA.

Belongs to the SEDS family. FtsW subfamily.

Its subcellular location is the cell inner membrane. It carries out the reaction [GlcNAc-(1-&gt;4)-Mur2Ac(oyl-L-Ala-gamma-D-Glu-L-Lys-D-Ala-D-Ala)](n)-di-trans,octa-cis-undecaprenyl diphosphate + beta-D-GlcNAc-(1-&gt;4)-Mur2Ac(oyl-L-Ala-gamma-D-Glu-L-Lys-D-Ala-D-Ala)-di-trans,octa-cis-undecaprenyl diphosphate = [GlcNAc-(1-&gt;4)-Mur2Ac(oyl-L-Ala-gamma-D-Glu-L-Lys-D-Ala-D-Ala)](n+1)-di-trans,octa-cis-undecaprenyl diphosphate + di-trans,octa-cis-undecaprenyl diphosphate + H(+). It functions in the pathway cell wall biogenesis; peptidoglycan biosynthesis. Functionally, peptidoglycan polymerase that is essential for cell division. The chain is Probable peptidoglycan glycosyltransferase FtsW from Marinomonas mediterranea (strain ATCC 700492 / JCM 21426 / NBRC 103028 / MMB-1).